The following is a 148-amino-acid chain: Deoxyuridine 5'-triphosphate nucleotidohydrolase (148 aa).

Residues 68–70 (RSG), N81, 85–87 (TID), and K95 each bind substrate.

Belongs to the dUTPase family. It depends on Mg(2+) as a cofactor.

The catalysed reaction is dUTP + H2O = dUMP + diphosphate + H(+). It functions in the pathway pyrimidine metabolism; dUMP biosynthesis; dUMP from dCTP (dUTP route): step 2/2. In terms of biological role, this enzyme is involved in nucleotide metabolism: it produces dUMP, the immediate precursor of thymidine nucleotides and it decreases the intracellular concentration of dUTP so that uracil cannot be incorporated into DNA. This is Deoxyuridine 5'-triphosphate nucleotidohydrolase from Thermoanaerobacter sp. (strain X514).